Consider the following 99-residue polypeptide: Large ribosomal subunit protein uL23 (99 aa).

The protein belongs to the universal ribosomal protein uL23 family. Part of the 50S ribosomal subunit. Contacts protein L29, and trigger factor when it is bound to the ribosome.

Functionally, one of the early assembly proteins it binds 23S rRNA. One of the proteins that surrounds the polypeptide exit tunnel on the outside of the ribosome. Forms the main docking site for trigger factor binding to the ribosome. This is Large ribosomal subunit protein uL23 from Magnetococcus marinus (strain ATCC BAA-1437 / JCM 17883 / MC-1).